The chain runs to 278 residues: HTH-type transcriptional regulator HdfR (278 aa).

An HTH lysR-type domain is found at 1–58 (MDTELLKTFLEVSRTRHFGRAAEALYLTQSAVSFRIRQLENQLGVNLFTRHRNNIRLT). Positions 18 to 37 (FGRAAEALYLTQSAVSFRIR) form a DNA-binding region, H-T-H motif.

This sequence belongs to the LysR transcriptional regulatory family.

In terms of biological role, negatively regulates the transcription of the flagellar master operon flhDC by binding to the upstream region of the operon. The chain is HTH-type transcriptional regulator HdfR from Salmonella dublin (strain CT_02021853).